The following is a 203-amino-acid chain: Outer-membrane lipoprotein LolB (203 aa).

The N-terminal stretch at 1 to 18 is a signal peptide; that stretch reads MYRLLCLLALLTAAGLMG. A lipid anchor (N-palmitoyl cysteine) is attached at Cys-19. The S-diacylglycerol cysteine moiety is linked to residue Cys-19.

It belongs to the LolB family. Monomer.

It localises to the cell outer membrane. Functionally, plays a critical role in the incorporation of lipoproteins in the outer membrane after they are released by the LolA protein. This is Outer-membrane lipoprotein LolB from Cellvibrio japonicus (strain Ueda107) (Pseudomonas fluorescens subsp. cellulosa).